A 266-amino-acid polypeptide reads, in one-letter code: Putative carbamate hydrolase RutD (266 aa).

Belongs to the AB hydrolase superfamily. Hydrolase RutD family.

It catalyses the reaction carbamate + 2 H(+) = NH4(+) + CO2. In terms of biological role, involved in pyrimidine catabolism. May facilitate the hydrolysis of carbamate, a reaction that can also occur spontaneously. The protein is Putative carbamate hydrolase RutD of Escherichia coli O139:H28 (strain E24377A / ETEC).